The chain runs to 95 residues: Integration host factor subunit beta (95 aa).

Belongs to the bacterial histone-like protein family. In terms of assembly, heterodimer of an alpha and a beta chain.

This protein is one of the two subunits of integration host factor, a specific DNA-binding protein that functions in genetic recombination as well as in transcriptional and translational control. This Shewanella putrefaciens (strain CN-32 / ATCC BAA-453) protein is Integration host factor subunit beta.